Here is a 216-residue protein sequence, read N- to C-terminus: 3-keto-L-gulonate-6-phosphate decarboxylase UlaD (216 aa).

A substrate-binding site is contributed by Asp11. Glu33 and Asp62 together coordinate Mg(2+). Residue Arg192 coordinates substrate.

The protein belongs to the HPS/KGPDC family. KGPDC subfamily. Homodimer. Mg(2+) is required as a cofactor.

The enzyme catalyses 3-dehydro-L-gulonate 6-phosphate + H(+) = L-xylulose 5-phosphate + CO2. Its pathway is cofactor degradation; L-ascorbate degradation; D-xylulose 5-phosphate from L-ascorbate: step 2/4. Its function is as follows. Catalyzes the decarboxylation of 3-keto-L-gulonate-6-P into L-xylulose-5-P. Is involved in the anaerobic L-ascorbate utilization. In Escherichia coli O139:H28 (strain E24377A / ETEC), this protein is 3-keto-L-gulonate-6-phosphate decarboxylase UlaD.